The sequence spans 664 residues: Macoilin (664 aa).

A run of 4 helical transmembrane segments spans residues 28-48 (TFLY…DFVL), 75-95 (AFSV…LLFI), 120-140 (VCLP…AIRF), and 154-174 (FAAH…KSYV). The segment covering 253–265 (REKGKEKDKDAKK) has biased composition (basic and acidic residues). The interval 253-274 (REKGKEKDKDAKKHNLGINNNN) is disordered. A Phosphoserine modification is found at S305. A compositionally biased stretch (polar residues) spans 320 to 348 (KNYKNASGVVNSSPRSHSATNGSIPSSSS). A disordered region spans residues 320-367 (KNYKNASGVVNSSPRSHSATNGSIPSSSSKNEKKQKCTSKSPSAHKDL). N-linked (GlcNAc...) asparagine glycosylation is present at N324. S332 carries the phosphoserine modification. 2 N-linked (GlcNAc...) asparagine glycosylation sites follow: N340 and N452. 2 positions are modified to phosphoserine: S631 and S634. Residues 631–664 (SPLSPVSPHYSSKFVETSPSGLDPNASVYQPLKK) form a disordered region. N655 is a glycosylation site (N-linked (GlcNAc...) asparagine).

The protein belongs to the macoilin family.

It is found in the rough endoplasmic reticulum membrane. It localises to the nucleus membrane. Functionally, plays a role in the regulation of neuronal activity. The polypeptide is Macoilin (MACO1) (Bos taurus (Bovine)).